Here is a 78-residue protein sequence, read N- to C-terminus: Ferredoxin 7Fe (78 aa).

4Fe-4S ferredoxin-type domains follow at residues 2–29 (AYVI…IHEG) and 31–60 (DQYY…HEDF). Positions 9 and 17 each coordinate [3Fe-4S] cluster. Residues Cys21, Cys40, Cys43, and Cys46 each coordinate [4Fe-4S] cluster. [3Fe-4S] cluster is bound at residue Cys50.

As to quaternary structure, monomer. It depends on [4Fe-4S] cluster as a cofactor. The cofactor is [3Fe-4S] cluster.

In Hydrogenibacillus schlegelii (Bacillus schlegelii), this protein is Ferredoxin 7Fe (fdxA).